Consider the following 81-residue polypeptide: Acyl carrier protein (81 aa).

Residues 4-79 (AEIKDKVYDI…QAIDYIVNKK (76 aa)) form the Carrier domain. O-(pantetheine 4'-phosphoryl)serine is present on Ser-39.

This sequence belongs to the acyl carrier protein (ACP) family. Post-translationally, 4'-phosphopantetheine is transferred from CoA to a specific serine of apo-ACP by AcpS. This modification is essential for activity because fatty acids are bound in thioester linkage to the sulfhydryl of the prosthetic group.

It localises to the cytoplasm. The protein operates within lipid metabolism; fatty acid biosynthesis. Its function is as follows. Carrier of the growing fatty acid chain in fatty acid biosynthesis. In Chlorobaculum tepidum (strain ATCC 49652 / DSM 12025 / NBRC 103806 / TLS) (Chlorobium tepidum), this protein is Acyl carrier protein.